Here is a 311-residue protein sequence, read N- to C-terminus: Delta(1)-pyrroline-2-carboxylate reductase 2 (311 aa).

It belongs to the ornithine cyclodeaminase/mu-crystallin family.

The catalysed reaction is L-proline + NAD(+) = 1-pyrroline-2-carboxylate + NADH + H(+). The enzyme catalyses L-proline + NADP(+) = 1-pyrroline-2-carboxylate + NADPH + H(+). Catalyzes the reduction of Delta(1)-pyrroline-2-carboxylate (Pyr2C) to L-proline, using preferentially NADPH over NADH as the electron donor. May be involved in a degradation pathway that converts trans-3-hydroxy-L-proline (t3LHyp) to L-proline. The protein is Delta(1)-pyrroline-2-carboxylate reductase 2 of Burkholderia ambifaria (strain ATCC BAA-244 / DSM 16087 / CCUG 44356 / LMG 19182 / AMMD) (Burkholderia cepacia (strain AMMD)).